Consider the following 79-residue polypeptide: Conotoxin 12 (79 aa).

An N-terminal signal peptide occupies residues 1 to 22 (MKLTCVLIITVLFLTASQLITA). Positions 23-47 (DYSRDQRQYRAVRLGDEMRNFKGAR) are excised as a propeptide. 3 disulfide bridges follow: cysteine 49-cysteine 62, cysteine 56-cysteine 67, and cysteine 61-cysteine 77.

It belongs to the conotoxin O1 superfamily. As to expression, expressed by the venom duct.

Its subcellular location is the secreted. The chain is Conotoxin 12 from Conus vexillum (Flag cone).